The sequence spans 259 residues: Protein SODIUM POTASSIUM ROOT DEFECTIVE 2 (259 aa).

Residues 141-165 form a disordered region; the sequence is PDSITGSVDQDPAKTVEAEAPAGED. Basic and acidic residues predominate over residues 151–165; sequence DPAKTVEAEAPAGED. The region spanning 180 to 246 is the HMA domain; that stretch reads QQVVVLKVSL…KVKNAQFWTN (67 aa). 2 residues coordinate a metal cation: Cys-191 and Cys-194.

This is Protein SODIUM POTASSIUM ROOT DEFECTIVE 2 from Arabidopsis thaliana (Mouse-ear cress).